The primary structure comprises 347 residues: NADH-quinone oxidoreductase subunit H (347 aa).

The next 8 helical transmembrane spans lie at 13 to 33 (LIIA…VAYL), 82 to 102 (GVFL…WAVI), 115 to 135 (VGIL…IMGG), 161 to 181 (IGFV…TDIV), 198 to 218 (FLDW…ISAL), 248 to 268 (FLLF…LMTV), 286 to 306 (VPGI…FAMV), and 325 to 345 (VFLP…KVFG).

It belongs to the complex I subunit 1 family. In terms of assembly, NDH-1 is composed of 14 different subunits. Subunits NuoA, H, J, K, L, M, N constitute the membrane sector of the complex.

Its subcellular location is the cell inner membrane. The enzyme catalyses a quinone + NADH + 5 H(+)(in) = a quinol + NAD(+) + 4 H(+)(out). Functionally, NDH-1 shuttles electrons from NADH, via FMN and iron-sulfur (Fe-S) centers, to quinones in the respiratory chain. The immediate electron acceptor for the enzyme in this species is believed to be ubiquinone. Couples the redox reaction to proton translocation (for every two electrons transferred, four hydrogen ions are translocated across the cytoplasmic membrane), and thus conserves the redox energy in a proton gradient. This subunit may bind ubiquinone. The chain is NADH-quinone oxidoreductase subunit H from Brucella melitensis biotype 1 (strain ATCC 23456 / CCUG 17765 / NCTC 10094 / 16M).